A 453-amino-acid polypeptide reads, in one-letter code: GTPase Der (453 aa).

2 EngA-type G domains span residues 3 to 167 (FTLA…PAQT) and 187 to 360 (IKVA…AVWN). GTP-binding positions include 9–16 (GRPNVGKS), 56–60 (DTAGL), 119–122 (NKSE), 193–200 (GRPNAGKS), 240–244 (DTAGL), and 305–308 (NKSD). Residues 361-445 (TRIPTNPLNR…PIRLTLREKG (85 aa)) form the KH-like domain.

The protein belongs to the TRAFAC class TrmE-Era-EngA-EngB-Septin-like GTPase superfamily. EngA (Der) GTPase family. Associates with the 50S ribosomal subunit.

Its function is as follows. GTPase that plays an essential role in the late steps of ribosome biogenesis. The polypeptide is GTPase Der (Azorhizobium caulinodans (strain ATCC 43989 / DSM 5975 / JCM 20966 / LMG 6465 / NBRC 14845 / NCIMB 13405 / ORS 571)).